The following is a 457-amino-acid chain: Adenylosuccinate synthetase isozyme 2 A (457 aa).

GTP-binding positions include 40–46 (GDEGKGK) and 68–70 (GHT). Aspartate 41 (proton acceptor) is an active-site residue. The Mg(2+) site is built by aspartate 41 and glycine 68. Residue aspartate 41 participates in substrate binding. IMP-binding positions include 41-44 (DEGK), 66-69 (NAGH), threonine 163, arginine 177, asparagine 256, threonine 271, and arginine 335. Histidine 69 acts as the Proton donor in catalysis. 331–337 (VTTGRKR) provides a ligand contact to substrate. Residues arginine 337, 363 to 365 (KLD), and 445 to 448 (GVGK) each bind GTP.

This sequence belongs to the adenylosuccinate synthetase family. As to quaternary structure, homodimer. The cofactor is Mg(2+).

The protein resides in the cytoplasm. The protein localises to the mitochondrion. It carries out the reaction IMP + L-aspartate + GTP = N(6)-(1,2-dicarboxyethyl)-AMP + GDP + phosphate + 2 H(+). It participates in purine metabolism; AMP biosynthesis via de novo pathway; AMP from IMP: step 1/2. With respect to regulation, inhibited competitively by AMP and IMP and non-competitively by fructose 1,6-bisphosphate. Functionally, plays an important role in the de novo pathway and in the salvage pathway of purine nucleotide biosynthesis. Catalyzes the first committed step in the biosynthesis of AMP from IMP. This Xenopus tropicalis (Western clawed frog) protein is Adenylosuccinate synthetase isozyme 2 A (adss2-a).